We begin with the raw amino-acid sequence, 282 residues long: HTH-type transcriptional activator RhaR (282 aa).

One can recognise an HTH araC/xylS-type domain in the interval 179–277 (DKLITALANS…GMTPSQWRHL (99 aa)). 2 consecutive DNA-binding regions (H-T-H motif) follow at residues 196-217 (DAFCQQEQCSERVLRQQFRAQT) and 244-267 (VSEISMQCGFEDSNYFSVVFTRET).

Binds DNA as a dimer.

It is found in the cytoplasm. Functionally, activates expression of the rhaSR operon in response to L-rhamnose. The protein is HTH-type transcriptional activator RhaR of Salmonella choleraesuis (strain SC-B67).